We begin with the raw amino-acid sequence, 361 residues long: 3-dehydroquinate synthase (361 aa).

The protein belongs to the archaeal-type DHQ synthase family.

The enzyme catalyses 2-amino-2,3,7-trideoxy-D-lyxo-hept-6-ulosonate + NAD(+) + H2O = 3-dehydroquinate + NH4(+) + NADH + H(+). Its function is as follows. Catalyzes the oxidative deamination and cyclization of 2-amino-3,7-dideoxy-D-threo-hept-6-ulosonic acid (ADH) to yield 3-dehydroquinate (DHQ), which is fed into the canonical shikimic pathway of aromatic amino acid biosynthesis. The sequence is that of 3-dehydroquinate synthase from Methanococcus maripaludis (strain DSM 14266 / JCM 13030 / NBRC 101832 / S2 / LL).